The sequence spans 136 residues: uncharacterized protein (136 aa).

This is an uncharacterized protein from Frog virus 3 (isolate Goorha) (FV-3).